Here is a 151-residue protein sequence, read N- to C-terminus: SsrA-binding protein (151 aa).

Belongs to the SmpB family.

Its subcellular location is the cytoplasm. In terms of biological role, required for rescue of stalled ribosomes mediated by trans-translation. Binds to transfer-messenger RNA (tmRNA), required for stable association of tmRNA with ribosomes. tmRNA and SmpB together mimic tRNA shape, replacing the anticodon stem-loop with SmpB. tmRNA is encoded by the ssrA gene; the 2 termini fold to resemble tRNA(Ala) and it encodes a 'tag peptide', a short internal open reading frame. During trans-translation Ala-aminoacylated tmRNA acts like a tRNA, entering the A-site of stalled ribosomes, displacing the stalled mRNA. The ribosome then switches to translate the ORF on the tmRNA; the nascent peptide is terminated with the 'tag peptide' encoded by the tmRNA and targeted for degradation. The ribosome is freed to recommence translation, which seems to be the essential function of trans-translation. The sequence is that of SsrA-binding protein from Lactobacillus acidophilus (strain ATCC 700396 / NCK56 / N2 / NCFM).